We begin with the raw amino-acid sequence, 190 residues long: Peptidyl-tRNA hydrolase (190 aa).

Phenylalanine 14 is a binding site for tRNA. The active-site Proton acceptor is histidine 19. Methionine 64, asparagine 66, and asparagine 112 together coordinate tRNA.

This sequence belongs to the PTH family. In terms of assembly, monomer.

Its subcellular location is the cytoplasm. The enzyme catalyses an N-acyl-L-alpha-aminoacyl-tRNA + H2O = an N-acyl-L-amino acid + a tRNA + H(+). Hydrolyzes ribosome-free peptidyl-tRNAs (with 1 or more amino acids incorporated), which drop off the ribosome during protein synthesis, or as a result of ribosome stalling. Functionally, catalyzes the release of premature peptidyl moieties from peptidyl-tRNA molecules trapped in stalled 50S ribosomal subunits, and thus maintains levels of free tRNAs and 50S ribosomes. In Staphylococcus saprophyticus subsp. saprophyticus (strain ATCC 15305 / DSM 20229 / NCIMB 8711 / NCTC 7292 / S-41), this protein is Peptidyl-tRNA hydrolase.